A 226-amino-acid chain; its full sequence is PKHD-type hydroxylase Sde_2812 (226 aa).

The Fe2OG dioxygenase domain occupies 78-178; sequence KIFPPLFNCY…RLASFFWLQS (101 aa). Fe cation-binding residues include histidine 96, aspartate 98, and histidine 159. Position 169 (arginine 169) interacts with 2-oxoglutarate.

Fe(2+) serves as cofactor. Requires L-ascorbate as cofactor.

The chain is PKHD-type hydroxylase Sde_2812 from Saccharophagus degradans (strain 2-40 / ATCC 43961 / DSM 17024).